Reading from the N-terminus, the 225-residue chain is Global nitrogen regulator (225 aa).

9–131 is an a nucleoside 3',5'-cyclic phosphate binding site; the sequence is RPLAAVFRRL…LLMLQGLSSR (123 aa). The HTH crp-type domain occupies 145 to 218; it reads RDMGSRLVSF…KKKITVHNPV (74 aa). A DNA-binding region (H-T-H motif) is located at residues 177–196; the sequence is SHQAIAEAIGSTRVTVTRLL.

In terms of biological role, required for full expression of proteins subject to ammonium repression. Transcriptional activator of genes subject to nitrogen control. This chain is Global nitrogen regulator (ntcA), found in Synechocystis sp. (strain ATCC 27184 / PCC 6803 / Kazusa).